A 154-amino-acid chain; its full sequence is Spermatogenesis-associated protein 19, mitochondrial (154 aa).

Residues 1 to 24 constitute a mitochondrion transit peptide; the sequence is MIITTWIMYILARKSIGLPFPPRV. A phosphoserine mark is found at Ser-26 and Ser-116.

As to expression, expressed in the testis.

The protein localises to the mitochondrion outer membrane. Its subcellular location is the mitochondrion. The protein resides in the cell projection. It is found in the cilium. It localises to the flagellum. Its function is as follows. Essential for sperm motility and male fertility. Plays an important role in sperm motility by regulating the organization and function of the mitochondria and is also required for correct sperm midpiece assembly. The protein is Spermatogenesis-associated protein 19, mitochondrial (Spata19) of Rattus norvegicus (Rat).